A 200-amino-acid chain; its full sequence is Small ribosomal subunit protein uS4 (200 aa).

The interval 22-41 (TGKELQKRPYAPGQHGPNQR) is disordered. The 61-residue stretch at 92–152 (SRLDNLVYRM…EKSRNLQVIK (61 aa)) folds into the S4 RNA-binding domain.

This sequence belongs to the universal ribosomal protein uS4 family. As to quaternary structure, part of the 30S ribosomal subunit. Contacts protein S5. The interaction surface between S4 and S5 is involved in control of translational fidelity.

One of the primary rRNA binding proteins, it binds directly to 16S rRNA where it nucleates assembly of the body of the 30S subunit. In terms of biological role, with S5 and S12 plays an important role in translational accuracy. In Halalkalibacterium halodurans (strain ATCC BAA-125 / DSM 18197 / FERM 7344 / JCM 9153 / C-125) (Bacillus halodurans), this protein is Small ribosomal subunit protein uS4.